The chain runs to 328 residues: MMENVFDYEDIQLIPAKCIVGSRAECDTSVELGGRTFKLPVVPANMQTIIDENIARYLAENDYFYIMHRFQPETRLAFVKDMHERGLYASISVGVKEEEYTFVQQLADQHVVPEYVTIDIAHGHSEAVINMIRHIKTHLPDSFVIAGNVGTPEAVRELEHAGADATKVGIGPGKVCITKIKTGFGTGGWQLAALRWCAKAASKPIIADGGIRTHGDIAKSVRFGATMVMIGSLFAGHEESPGDTIEKDGKLYKEYFGSASEYQKGERKNVEGKKMYVEHKGSLAETLLEMEQDLQSSISYAGGKRLDAIRNVDYVVVKNSIFNGDKIY.

The active-site Thioimidate intermediate is the C176. 205–228 (IIADGGIRTHGDIAKSVRFGATMV) is a binding site for NADP(+).

This sequence belongs to the IMPDH/GMPR family. GuaC type 2 subfamily.

The catalysed reaction is IMP + NH4(+) + NADP(+) = GMP + NADPH + 2 H(+). Its function is as follows. Catalyzes the irreversible NADPH-dependent deamination of GMP to IMP. It functions in the conversion of nucleobase, nucleoside and nucleotide derivatives of G to A nucleotides, and in maintaining the intracellular balance of A and G nucleotides. The protein is GMP reductase of Shouchella clausii (strain KSM-K16) (Alkalihalobacillus clausii).